Reading from the N-terminus, the 491-residue chain is Ketol-acid reductoisomerase (NADP(+)) (491 aa).

Positions 15–208 (AQLGKCRFMA…GGHRAGVLES (194 aa)) constitute a KARI N-terminal Rossmann domain. NADP(+)-binding positions include 45–48 (CGAQ), arginine 68, arginine 76, serine 78, and 108–110 (DKQ). The active site involves histidine 132. Glycine 158 serves as a coordination point for NADP(+). 2 consecutive KARI C-terminal knotted domains span residues 209–344 (SFVA…TASQ) and 345–484 (FDGK…MKDM). Residues aspartate 217, glutamate 221, glutamate 389, and glutamate 393 each coordinate Mg(2+). A substrate-binding site is contributed by serine 414.

Belongs to the ketol-acid reductoisomerase family. Requires Mg(2+) as cofactor.

The catalysed reaction is (2R)-2,3-dihydroxy-3-methylbutanoate + NADP(+) = (2S)-2-acetolactate + NADPH + H(+). It carries out the reaction (2R,3R)-2,3-dihydroxy-3-methylpentanoate + NADP(+) = (S)-2-ethyl-2-hydroxy-3-oxobutanoate + NADPH + H(+). It participates in amino-acid biosynthesis; L-isoleucine biosynthesis; L-isoleucine from 2-oxobutanoate: step 2/4. Its pathway is amino-acid biosynthesis; L-valine biosynthesis; L-valine from pyruvate: step 2/4. Its function is as follows. Involved in the biosynthesis of branched-chain amino acids (BCAA). Catalyzes an alkyl-migration followed by a ketol-acid reduction of (S)-2-acetolactate (S2AL) to yield (R)-2,3-dihydroxy-isovalerate. In the isomerase reaction, S2AL is rearranged via a Mg-dependent methyl migration to produce 3-hydroxy-3-methyl-2-ketobutyrate (HMKB). In the reductase reaction, this 2-ketoacid undergoes a metal-dependent reduction by NADPH to yield (R)-2,3-dihydroxy-isovalerate. The chain is Ketol-acid reductoisomerase (NADP(+)) from Enterobacter sp. (strain 638).